We begin with the raw amino-acid sequence, 46 residues long: MQIVEAIYEDGVLKLLKNLKLKEHSKVIIKVIDEEEIEKILDSRDY.

This sequence belongs to the UPF0165 family.

Functionally, possibly the antitoxin component of a type II toxin-antitoxin (TA) system. Its cognate toxin is VapC3 (Potential). In Pyrococcus furiosus (strain ATCC 43587 / DSM 3638 / JCM 8422 / Vc1), this protein is Putative antitoxin VapB3 (vapB3).